Consider the following 494-residue polypeptide: Glycosyl hydrolase family 109 protein (494 aa).

The segment at 1–32 is disordered; it reads MNDDARPAPEPQDIPPHSGAADEVNRQDPSRR. Residues 1–58 constitute a signal peptide (tat-type signal); sequence MNDDARPAPEPQDIPPHSGAADEVNRQDPSRRSVLWTTAGVAGAGLGLGALGAGTASA. NAD(+) is bound by residues 104–105, aspartate 126, 175–178, 195–196, and asparagine 224; these read NR, WELH, and EC. Substrate contacts are provided by residues tyrosine 253, arginine 272, 284-287, and tyrosine 366; that span reads YPNH. NAD(+) is bound at residue tyrosine 284.

It belongs to the Gfo/Idh/MocA family. Glycosyl hydrolase 109 subfamily. NAD(+) serves as cofactor. Predicted to be exported by the Tat system. The position of the signal peptide cleavage has not been experimentally proven.

Functionally, glycosidase. This is Glycosyl hydrolase family 109 protein from Streptomyces filamentosus (Streptomyces roseosporus).